A 342-amino-acid chain; its full sequence is Anthranilate phosphoribosyltransferase (342 aa).

Residues Gly-90, 93-94, Thr-98, 100-103, 118-126, and Ala-130 contribute to the 5-phospho-alpha-D-ribose 1-diphosphate site; these read GD, NIST, and KHGNRSVSS. Gly-90 contributes to the anthranilate binding site. Ser-102 provides a ligand contact to Mg(2+). Asn-121 contacts anthranilate. Residue Arg-176 participates in anthranilate binding. Mg(2+) is bound by residues Asp-234 and Glu-235.

This sequence belongs to the anthranilate phosphoribosyltransferase family. As to quaternary structure, homodimer. Requires Mg(2+) as cofactor.

The enzyme catalyses N-(5-phospho-beta-D-ribosyl)anthranilate + diphosphate = 5-phospho-alpha-D-ribose 1-diphosphate + anthranilate. It functions in the pathway amino-acid biosynthesis; L-tryptophan biosynthesis; L-tryptophan from chorismate: step 2/5. Functionally, catalyzes the transfer of the phosphoribosyl group of 5-phosphorylribose-1-pyrophosphate (PRPP) to anthranilate to yield N-(5'-phosphoribosyl)-anthranilate (PRA). This chain is Anthranilate phosphoribosyltransferase, found in Mannheimia succiniciproducens (strain KCTC 0769BP / MBEL55E).